The following is a 431-amino-acid chain: Na(+)-translocating NADH-quinone reductase subunit F (431 aa).

Residues 10–30 (ISIASLVFCVIGLILSGIILI) traverse the membrane as a helical segment. Residues 41–133 (CKLKINDDDS…DMCLEIEERY (93 aa)) form the 2Fe-2S ferredoxin-type domain. Residues C76, C82, C85, and C117 each coordinate [2Fe-2S] cluster. Positions 136-286 (ASSWEGTVVS…SGPYGESFMK (151 aa)) constitute an FAD-binding FR-type domain.

It belongs to the NqrF family. Composed of six subunits; NqrA, NqrB, NqrC, NqrD, NqrE and NqrF. The cofactor is [2Fe-2S] cluster. Requires FAD as cofactor.

It localises to the cell inner membrane. It catalyses the reaction a ubiquinone + n Na(+)(in) + NADH + H(+) = a ubiquinol + n Na(+)(out) + NAD(+). Its function is as follows. NQR complex catalyzes the reduction of ubiquinone-1 to ubiquinol by two successive reactions, coupled with the transport of Na(+) ions from the cytoplasm to the periplasm. The first step is catalyzed by NqrF, which accepts electrons from NADH and reduces ubiquinone-1 to ubisemiquinone by a one-electron transfer pathway. This Chlamydia caviae (strain ATCC VR-813 / DSM 19441 / 03DC25 / GPIC) (Chlamydophila caviae) protein is Na(+)-translocating NADH-quinone reductase subunit F.